The chain runs to 352 residues: Geranylgeranyl transferase type-1 subunit beta (352 aa).

4 PFTB repeats span residues 135–180, 187–228, 236–276, and 283–325; these read VNKK…FILD, KESA…SLLG, FKEQ…MMID, and FASI…SFGN. Geranylgeranyl diphosphate is bound by residues 213–215 and 255–258; these read HGG and RTNK. Residues aspartate 261 and cysteine 263 each contribute to the Zn(2+) site. Position 264 to 267 (264 to 267) interacts with geranylgeranyl diphosphate; sequence YAFW. Position 313 (histidine 313) interacts with Zn(2+).

Belongs to the protein prenyltransferase subunit beta family. In terms of assembly, heterodimer of an alpha and a beta subunit. Zn(2+) is required as a cofactor. It depends on Mg(2+) as a cofactor.

It catalyses the reaction geranylgeranyl diphosphate + L-cysteinyl-[protein] = S-geranylgeranyl-L-cysteinyl-[protein] + diphosphate. Its function is as follows. Catalyzes the transfer of a geranyl-geranyl moiety from geranyl-geranyl pyrophosphate to a cysteine at the fourth position from the C-terminus of proteins having the C-terminal sequence Cys-aliphatic-aliphatic-X. The polypeptide is Geranylgeranyl transferase type-1 subunit beta (pggt1b) (Dictyostelium discoideum (Social amoeba)).